A 432-amino-acid polypeptide reads, in one-letter code: Adenylosuccinate synthetase (432 aa).

GTP-binding positions include 13-19 and 41-43; these read GDEGKGK and GHT. The active-site Proton acceptor is the aspartate 14. Mg(2+) is bound by residues aspartate 14 and glycine 41. IMP is bound by residues 14 to 17, 39 to 42, threonine 130, arginine 144, glutamine 225, threonine 240, and arginine 304; these read DEGK and NAGH. Histidine 42 (proton donor) is an active-site residue. 300–306 is a substrate binding site; that stretch reads AVTGRPR. GTP contacts are provided by residues arginine 306, 332–334, and 415–417; these read KLD and STG.

Belongs to the adenylosuccinate synthetase family. Homodimer. Requires Mg(2+) as cofactor.

It is found in the cytoplasm. It catalyses the reaction IMP + L-aspartate + GTP = N(6)-(1,2-dicarboxyethyl)-AMP + GDP + phosphate + 2 H(+). Its pathway is purine metabolism; AMP biosynthesis via de novo pathway; AMP from IMP: step 1/2. Functionally, plays an important role in the de novo pathway of purine nucleotide biosynthesis. Catalyzes the first committed step in the biosynthesis of AMP from IMP. In Actinobacillus succinogenes (strain ATCC 55618 / DSM 22257 / CCUG 43843 / 130Z), this protein is Adenylosuccinate synthetase.